The primary structure comprises 403 residues: Argininosuccinate synthase (403 aa).

ATP is bound at residue 10 to 18; that stretch reads AYSGGLDTS. Position 87 (Tyr-87) interacts with L-citrulline. Gly-117 serves as a coordination point for ATP. Residues Thr-119, Asn-123, and Asp-124 each coordinate L-aspartate. Asn-123 provides a ligand contact to L-citrulline. Residues Arg-127, Ser-175, Glu-260, and Tyr-272 each coordinate L-citrulline.

This sequence belongs to the argininosuccinate synthase family. Type 1 subfamily. In terms of assembly, homotetramer.

The protein resides in the cytoplasm. The catalysed reaction is L-citrulline + L-aspartate + ATP = 2-(N(omega)-L-arginino)succinate + AMP + diphosphate + H(+). Its pathway is amino-acid biosynthesis; L-arginine biosynthesis; L-arginine from L-ornithine and carbamoyl phosphate: step 2/3. This Bacillus subtilis (strain 168) protein is Argininosuccinate synthase.